The primary structure comprises 463 residues: tRNA modification GTPase MnmE (463 aa).

(6S)-5-formyl-5,6,7,8-tetrahydrofolate-binding residues include R26, E88, and R127. The 160-residue stretch at 224 to 383 (GLATAIIGRP…LEQRIAKMFF (160 aa)) folds into the TrmE-type G domain. N234 is a K(+) binding site. GTP is bound by residues 234–239 (NVGKSS), 253–259 (TDVAGTT), and 278–281 (DTAG). S238 lines the Mg(2+) pocket. The K(+) site is built by T253, V255, and T258. Mg(2+) is bound at residue T259. Residue K463 coordinates (6S)-5-formyl-5,6,7,8-tetrahydrofolate.

The protein belongs to the TRAFAC class TrmE-Era-EngA-EngB-Septin-like GTPase superfamily. TrmE GTPase family. As to quaternary structure, homodimer. Heterotetramer of two MnmE and two MnmG subunits. K(+) serves as cofactor.

Its subcellular location is the cytoplasm. Functionally, exhibits a very high intrinsic GTPase hydrolysis rate. Involved in the addition of a carboxymethylaminomethyl (cmnm) group at the wobble position (U34) of certain tRNAs, forming tRNA-cmnm(5)s(2)U34. The sequence is that of tRNA modification GTPase MnmE from Lactiplantibacillus plantarum (strain ATCC BAA-793 / NCIMB 8826 / WCFS1) (Lactobacillus plantarum).